Here is a 209-residue protein sequence, read N- to C-terminus: Protein TIC 20-v, chloroplastic (209 aa).

The transit peptide at 1–49 directs the protein to the chloroplast; the sequence is MAIISQFFAPLPSLTGTLTLTGRSFLPLNLDTQFPKPRLSRDRAATLVL. The next 4 helical transmembrane spans lie at 63–83, 103–123, 132–152, and 173–193; these read IISAVCYFYPFFDGIQYGKFI, AFKSFPFNGFLIFITLYFVVV, VRFNTMQAIVLDVLLIFPDLL, and TVFLFLLVSLIYGFSACLFGL.

This sequence belongs to the Tic20 family. In terms of assembly, part of the Tic complex. In terms of tissue distribution, expressed in leaves, siliques and roots.

Its subcellular location is the plastid. The protein localises to the chloroplast inner membrane. Functionally, may be involved in protein precursor import into chloroplasts. Not redundant with TIC20-I, TIC20-II or TIC20-IV. The chain is Protein TIC 20-v, chloroplastic (TIC20-V) from Arabidopsis thaliana (Mouse-ear cress).